A 298-amino-acid polypeptide reads, in one-letter code: uncharacterized protein (298 aa).

The next 8 helical transmembrane spans lie at 5-25 (SLAT…FLLW), 52-72 (VISG…FLAL), 105-125 (LFLL…QVLV), 138-158 (IFWG…LLML), 163-183 (IQGG…NDIA), 208-228 (GLMG…PLLT), 236-256 (LLAG…MSAI), and 273-293 (GGLL…FYFI).

The protein belongs to the CDS family.

It is found in the cell membrane. This is an uncharacterized protein from Escherichia coli (strain K12).